Consider the following 260-residue polypeptide: Ribonuclease HII (260 aa).

An RNase H type-2 domain is found at 71-259; it reads ELVAGVDEVG…VHDAIVNKKN (189 aa). A divalent metal cation-binding residues include Asp-77, Glu-78, and Asp-169.

This sequence belongs to the RNase HII family. Mn(2+) serves as cofactor. The cofactor is Mg(2+).

It is found in the cytoplasm. The enzyme catalyses Endonucleolytic cleavage to 5'-phosphomonoester.. Endonuclease that specifically degrades the RNA of RNA-DNA hybrids. This chain is Ribonuclease HII, found in Leuconostoc citreum (strain KM20).